We begin with the raw amino-acid sequence, 628 residues long: Pinene synthase, chloroplastic (628 aa).

The N-terminal 36 residues, 1–36 (MALVSTAPLASKSCLHKSLISSTHELKALSRTIPAL), are a transit peptide targeting the chloroplast. Mg(2+)-binding residues include D379, D383, and D531. The DDXXD motif motif lies at 379 to 383 (DDMYD).

It belongs to the terpene synthase family. Tpsd subfamily. Requires Mg(2+) as cofactor. The cofactor is Mn(2+). K(+) serves as cofactor.

It localises to the plastid. The protein resides in the chloroplast. It carries out the reaction (2E)-geranyl diphosphate = (1S,5S)-alpha-pinene + diphosphate. The enzyme catalyses (2E)-geranyl diphosphate = (1S,5S)-beta-pinene + diphosphate. The protein operates within terpene metabolism; oleoresin biosynthesis. Functionally, involved in defensive oleoresin formation in conifers in response to insect attack or other injury. Involved in monoterpene (C10) olefins biosynthesis. A mixture of alpha- and beta-pinene is produced by this enzyme. This is Pinene synthase, chloroplastic (ag3) from Abies grandis (Grand fir).